A 141-amino-acid chain; its full sequence is Nucleoside diphosphate kinase (141 aa).

Residues K11, F59, R87, T93, R104, and N114 each coordinate ATP. The active-site Pros-phosphohistidine intermediate is H117.

This sequence belongs to the NDK family. In terms of assembly, homotetramer. Mg(2+) serves as cofactor.

Its subcellular location is the cytoplasm. It catalyses the reaction a 2'-deoxyribonucleoside 5'-diphosphate + ATP = a 2'-deoxyribonucleoside 5'-triphosphate + ADP. It carries out the reaction a ribonucleoside 5'-diphosphate + ATP = a ribonucleoside 5'-triphosphate + ADP. In terms of biological role, major role in the synthesis of nucleoside triphosphates other than ATP. The ATP gamma phosphate is transferred to the NDP beta phosphate via a ping-pong mechanism, using a phosphorylated active-site intermediate. The chain is Nucleoside diphosphate kinase from Vibrio parahaemolyticus serotype O3:K6 (strain RIMD 2210633).